Reading from the N-terminus, the 504-residue chain is E3 ubiquitin-protein ligase dbl4 (504 aa).

The segment at 127 to 338 is TRIAD supradomain; that stretch reads HEGTCEICYD…NNWYTCNRYE (212 aa). Zn(2+)-binding residues include C131, C134, C147, H149, C152, C155, C173, C178, C217, C222, C244, C246, C251, C254, H259, C264, C291, and C294. The segment at 131–178 adopts an RING-type 1 zinc-finger fold; the sequence is CEICYDEGCLPFFSAECDHEFCLACYRQYLDSRISEGESVIQCPEESC. An IBR-type zinc finger spans residues 197–264; sequence DRYHRLLDRS…GHDNHQPTIC (68 aa). The RING-type 2; atypical zinc-finger motif lies at 291–320; the sequence is CPKCSTTIEKNGGCNHMTCKKCKYEFCWVC. C304 is an active-site residue. Residues C309, C312, C317, C320, H327, and C334 each contribute to the Zn(2+) site.

The protein belongs to the RBR family.

The protein localises to the cytoplasm. It is found in the nucleus. It carries out the reaction [E2 ubiquitin-conjugating enzyme]-S-ubiquitinyl-L-cysteine + [acceptor protein]-L-lysine = [E2 ubiquitin-conjugating enzyme]-L-cysteine + [acceptor protein]-N(6)-ubiquitinyl-L-lysine.. It participates in protein modification; protein ubiquitination. Probable ubiquitin-protein ligase involved in the degradation-related ubiquitination of histones. Contributes to the post-translational regulation of histone protein levels by polyubiquitination of excess histones for subsequent degradation. In Schizosaccharomyces pombe (strain 972 / ATCC 24843) (Fission yeast), this protein is E3 ubiquitin-protein ligase dbl4.